We begin with the raw amino-acid sequence, 131 residues long: Small ribosomal subunit protein bS6 (131 aa).

Belongs to the bacterial ribosomal protein bS6 family.

Its function is as follows. Binds together with bS18 to 16S ribosomal RNA. The sequence is that of Small ribosomal subunit protein bS6 from Borrelia hermsii (strain HS1 / DAH).